Reading from the N-terminus, the 480-residue chain is ATP synthase subunit beta 1 (480 aa).

Glycine 154–threonine 161 lines the ATP pocket.

This sequence belongs to the ATPase alpha/beta chains family. As to quaternary structure, F-type ATPases have 2 components, CF(1) - the catalytic core - and CF(0) - the membrane proton channel. CF(1) has five subunits: alpha(3), beta(3), gamma(1), delta(1), epsilon(1). CF(0) has four main subunits: a(1), b(1), b'(1) and c(9-12).

It localises to the cell inner membrane. The catalysed reaction is ATP + H2O + 4 H(+)(in) = ADP + phosphate + 5 H(+)(out). In terms of biological role, produces ATP from ADP in the presence of a proton gradient across the membrane. The catalytic sites are hosted primarily by the beta subunits. The sequence is that of ATP synthase subunit beta 1 from Chlorobaculum tepidum (strain ATCC 49652 / DSM 12025 / NBRC 103806 / TLS) (Chlorobium tepidum).